Here is a 345-residue protein sequence, read N- to C-terminus: Histidinol-phosphate aminotransferase (345 aa).

At Lys-206 the chain carries N6-(pyridoxal phosphate)lysine.

It belongs to the class-II pyridoxal-phosphate-dependent aminotransferase family. Histidinol-phosphate aminotransferase subfamily. In terms of assembly, homodimer. Pyridoxal 5'-phosphate serves as cofactor.

It catalyses the reaction L-histidinol phosphate + 2-oxoglutarate = 3-(imidazol-4-yl)-2-oxopropyl phosphate + L-glutamate. It participates in amino-acid biosynthesis; L-histidine biosynthesis; L-histidine from 5-phospho-alpha-D-ribose 1-diphosphate: step 7/9. The chain is Histidinol-phosphate aminotransferase from Bacteroides fragilis (strain YCH46).